A 101-amino-acid polypeptide reads, in one-letter code: Nucleoid-associated protein Bind_0255 (101 aa).

This sequence belongs to the YbaB/EbfC family. In terms of assembly, homodimer.

It is found in the cytoplasm. Its subcellular location is the nucleoid. Functionally, binds to DNA and alters its conformation. May be involved in regulation of gene expression, nucleoid organization and DNA protection. The protein is Nucleoid-associated protein Bind_0255 of Beijerinckia indica subsp. indica (strain ATCC 9039 / DSM 1715 / NCIMB 8712).